The chain runs to 292 residues: RWD domain-containing protein 2A (292 aa).

One can recognise an RWD domain in the interval 14–134 (LEMEMLFSMF…QWLQDNSASY (121 aa)).

This chain is RWD domain-containing protein 2A (RWDD2A), found in Macaca fascicularis (Crab-eating macaque).